Reading from the N-terminus, the 393-residue chain is Glutamate 5-kinase (393 aa).

Position 17 (K17) interacts with ATP. Substrate is bound by residues S57, D144, and N156. Residue 176-177 (SD) coordinates ATP. The PUA domain occupies 282–359 (AGSIAIDAGA…AEIAAILGYA (78 aa)). A disordered region spans residues 374–393 (APSGARSEEGGNEKKGKLHA). A compositionally biased stretch (basic and acidic residues) spans 379–393 (RSEEGGNEKKGKLHA).

This sequence belongs to the glutamate 5-kinase family.

It localises to the cytoplasm. The catalysed reaction is L-glutamate + ATP = L-glutamyl 5-phosphate + ADP. It participates in amino-acid biosynthesis; L-proline biosynthesis; L-glutamate 5-semialdehyde from L-glutamate: step 1/2. Catalyzes the transfer of a phosphate group to glutamate to form L-glutamate 5-phosphate. The sequence is that of Glutamate 5-kinase from Sinorhizobium fredii (strain NBRC 101917 / NGR234).